Reading from the N-terminus, the 290-residue chain is MRSTLLAFALAVALPAAHTSAAEVPLPQLRAYTVDASWLQPMAPLQIADHTWQIGTEDLTALLVQTPDGAVLLDGGMPQMASHLLDNMKARGVTPRDLRLILLSHAHADHAGPVAELKRRTGAKVAANAESAVLLARGGSDDLHFGDGITYPPANADRIVMDGEVITVGGIVFTAHFMAGHTPGSTAWTWTDTRNGKPVRIAYADSLSAPGYQLQGNPRYPHLIEDYRRSFATVRALPCDVLLTPHPGASNWDYAAGARAGAKALTCKAYADAAEQKFDGQLAKETAGAR.

The signal sequence occupies residues 1–21 (MRSTLLAFALAVALPAAHTSA). The propeptide occupies 22 to 33 (AEVPLPQLRAYT). Zn(2+)-binding residues include H105, H107, D109, H110, and H181. D205 is a substrate binding site. The cysteines at positions 239 and 267 are disulfide-linked. H246 lines the Zn(2+) pocket.

Belongs to the metallo-beta-lactamase superfamily. Class-B beta-lactamase family. As to quaternary structure, homotetramer. It depends on Zn(2+) as a cofactor.

The protein resides in the periplasm. The enzyme catalyses a beta-lactam + H2O = a substituted beta-amino acid. Its activity is regulated as follows. Inhibited by Hg(2+) or Cu(2+), and by chelating agents such as EDTA and O-phenanthroline. Reduced enzymatic activity in presence of cobalt, nickel, cadmium, and manganese. Its function is as follows. Confers resistance to the different beta-lactams antibiotics (penicillin, cephalosporin and carbapenem) via the hydrolysis of the beta-lactam ring. The polypeptide is Metallo-beta-lactamase L1 type 3 (Stenotrophomonas maltophilia (Pseudomonas maltophilia)).